A 364-amino-acid chain; its full sequence is UDP-arabinopyranose mutase 1 (364 aa).

The DXD motif signature appears at Asp110–Asp112. Arg158 is a glycosylation site (N-linked (Glc...) arginine).

It belongs to the RGP family. Heteromers with UAM2 and UAM3. Mn(2+) is required as a cofactor. Requires Mg(2+) as cofactor. In terms of processing, reversibly glycosylated in vitro at Arg-158 by UDP-glucose. Reversibly glycosylated by UDP-xylose and UDP-galactose.

The protein resides in the golgi apparatus. The enzyme catalyses UDP-beta-L-arabinofuranose = UDP-beta-L-arabinopyranose. Functionally, UDP-L-arabinose mutase involved in the biosynthesis of cell wall non-cellulosic polysaccharides. Catalyzes the interconvertion of UDP-L-arabinopyranose (UDP-Arap) and UDP-L-arabinofuranose (UDP-Araf). Preferentially catalyzes the formation of UDP-Arap from UDP-Araf. At thermodynamic equilibrium in vitro the ratio of the pyranose form over the furanose form is 90:10. Is probably active as heteromer in vivo. The chain is UDP-arabinopyranose mutase 1 from Oryza sativa subsp. japonica (Rice).